The chain runs to 251 residues: Probable transcriptional regulatory protein cgR_1708 (251 aa).

A disordered region spans residues 1 to 22 (MAGHSKWATTKHKKAANDAKRG).

Belongs to the TACO1 family.

The protein resides in the cytoplasm. The polypeptide is Probable transcriptional regulatory protein cgR_1708 (Corynebacterium glutamicum (strain R)).